The primary structure comprises 252 residues: Aquaporin TIP4-4 (252 aa).

2 consecutive transmembrane segments (helical) span residues 20 to 40 and 53 to 73; these read AVLAELILTFLFVFAGVGSAM and VVGLTAVALAHTLVVAVMVSA. Positions 83–85 match the NPA 1 motif; it reads NPA. 3 consecutive transmembrane segments (helical) span residues 105-125, 143-163, and 168-188; these read VAAQLLGSTLACLLLAFLAVA, GVLMEAVLTFSLLFAVYATVV, and AVGGMGPLLVGLVVGANVLAG. An NPA 2 motif is present at residues 197-199; it reads NPA. A helical transmembrane segment spans residues 216-236; that stretch reads VYWVGPLIGGPLAGLVYDGLF.

It belongs to the MIP/aquaporin (TC 1.A.8) family. TIP (TC 1.A.8.10) subfamily.

It is found in the vacuole membrane. In terms of biological role, aquaporins facilitate the transport of water and small neutral solutes across cell membranes. The chain is Aquaporin TIP4-4 (TIP4-4) from Zea mays (Maize).